A 321-amino-acid chain; its full sequence is MLNNEYKNSSLKIFSLKGNEALAQEVADQVGIELGKCSVKRFSDGEIQINIEESIRGCDVFIIQPTSYPVNLHLMELLIMIDACKRASAATINIVVPYYGYARQDRKARSRKPITAKLVANLIETAGATRMIALDLHAPQIQGFFDIPIDHLMGVPILAKHFKDDPNINPEECVVVSPDHGGVTRARKLADILKTPIAIIDKRRPRPNVAEVMNIVGEIEGRTAIIIDDIIDTAGTITLAAQALKDKGAKEVYACCTHPVLSGPAKERIENSAIKELIVTNSIHLDEDRKPSNTKELSVAGLIAQAIIRVYERESVSVLFD.

Residues 44–46 and 103–104 contribute to the ATP site; these read DGE and RQ. Mg(2+) is bound by residues H137 and D179. K202 is an active-site residue. D-ribose 5-phosphate-binding positions include R204, D228, and 232–236; that span reads DTAGT.

It belongs to the ribose-phosphate pyrophosphokinase family. Class I subfamily. Homohexamer. Requires Mg(2+) as cofactor.

It is found in the cytoplasm. The enzyme catalyses D-ribose 5-phosphate + ATP = 5-phospho-alpha-D-ribose 1-diphosphate + AMP + H(+). It participates in metabolic intermediate biosynthesis; 5-phospho-alpha-D-ribose 1-diphosphate biosynthesis; 5-phospho-alpha-D-ribose 1-diphosphate from D-ribose 5-phosphate (route I): step 1/1. Involved in the biosynthesis of the central metabolite phospho-alpha-D-ribosyl-1-pyrophosphate (PRPP) via the transfer of pyrophosphoryl group from ATP to 1-hydroxyl of ribose-5-phosphate (Rib-5-P). The protein is Ribose-phosphate pyrophosphokinase of Staphylococcus aureus (strain COL).